A 257-amino-acid polypeptide reads, in one-letter code: UPF0246 protein Rsph17029_0026 (257 aa).

Belongs to the UPF0246 family.

This Cereibacter sphaeroides (strain ATCC 17029 / ATH 2.4.9) (Rhodobacter sphaeroides) protein is UPF0246 protein Rsph17029_0026.